We begin with the raw amino-acid sequence, 290 residues long: Probable prolyl 4-hydroxylase 8 (290 aa).

The Cytoplasmic portion of the chain corresponds to 1–19; it reads MAKKPKQLRNKPRKSFSTQ. Residues 20-40 traverse the membrane as a helical; Signal-anchor for type II membrane protein segment; it reads TFTVVVLVLFVILILVGLGIF. Topologically, residues 41–290 are lumenal; it reads SLPSTNKTSS…TKWFHVHEYN (250 aa). N-linked (GlcNAc...) asparagine glycosylation is present at Asn46. Positions 163 to 286 constitute a Fe2OG dioxygenase domain; it reads NGEGLQVLHY…KWSSTKWFHV (124 aa). Fe cation is bound by residues His181 and Asp183. Asn222 carries N-linked (GlcNAc...) asparagine glycosylation. His267 contributes to the Fe cation binding site. Lys277 contacts 2-oxoglutarate.

Belongs to the P4HA family. The cofactor is Fe(2+). It depends on L-ascorbate as a cofactor.

It localises to the endoplasmic reticulum membrane. It catalyses the reaction L-prolyl-[collagen] + 2-oxoglutarate + O2 = trans-4-hydroxy-L-prolyl-[collagen] + succinate + CO2. Functionally, catalyzes the post-translational formation of 4-hydroxyproline in -Xaa-Pro-Gly- sequences in proline-rich peptide sequences of plant glycoproteins and other proteins. Hydroxyprolines are important constituent of many plant cell wall glycoproteins such as extensins, hydroxyproline-rich glycoproteins, lectins and arabinogalactan proteins. In Arabidopsis thaliana (Mouse-ear cress), this protein is Probable prolyl 4-hydroxylase 8.